We begin with the raw amino-acid sequence, 212 residues long: Adenylate kinase (212 aa).

An ATP-binding site is contributed by 10–15 (GSGKGT). Residues 30–59 (STGDLMRKEINDETPLGIECARYMNEGRLV) are NMP. AMP-binding positions include threonine 31, arginine 36, 57–59 (RLV), and glutamine 90. Residues 124–161 (GRLICPKCKVSYHIISRKPKLEGICDNDGTELVRRPDD) form an LID region. ATP is bound at residue arginine 125. Zn(2+) is bound by residues cysteine 128 and cysteine 131. 134 to 135 (SY) contacts ATP. Cysteine 148 and aspartate 151 together coordinate Zn(2+). The AMP site is built by arginine 158 and arginine 169. An ATP-binding site is contributed by asparagine 198.

Belongs to the adenylate kinase family. As to quaternary structure, monomer.

The protein resides in the cytoplasm. It catalyses the reaction AMP + ATP = 2 ADP. The protein operates within purine metabolism; AMP biosynthesis via salvage pathway; AMP from ADP: step 1/1. Its function is as follows. Catalyzes the reversible transfer of the terminal phosphate group between ATP and AMP. Plays an important role in cellular energy homeostasis and in adenine nucleotide metabolism. The protein is Adenylate kinase of Mesoplasma florum (strain ATCC 33453 / NBRC 100688 / NCTC 11704 / L1) (Acholeplasma florum).